We begin with the raw amino-acid sequence, 495 residues long: MPLYKSQSIKIYNSLSGEKEIFSPINEGNIGMYVCGPTVYSNVHLGNVRTFMSFDVIYRYFLHLGYKVRYIRNITDVGHIVDDVDHGEDKIAKKAKLEQLEPMEIVQRYTVDFHNVLKAYNLLPPSIEPTATGHIIEQIEIVKTIINKGIGYESNGSVYFDVVKFNESNHYGKLSGRNIEDMLANTRDTDGQSDKRNHQDFALWKKAEPEHIMRWPSPWSDGFPGWHLECTAMSTKYLGSHFDIHGGGMDLKFPHHECEIAQGEACTGQEPVNYWMHANMLTLNGKKMSKSTGNNILPSEIYSGGSPFLTKAFSASVARFFMLQAHYRSNLDFTNDAILAAEKGFYRLMEAIGSLKNTAQFTTSNTTSIDIKAWKQNCYDAMNDDFNTPILIAHLFEGVRFVNVLKENKETITTEDLLDFLTTMNAFVFDVLGLEDEKLATNNNDKLDGVVEMLIQMRKQARDNKDFAMSDQIRDQLLALGIQLKDSKEGTTFSI.

A Zn(2+)-binding site is contributed by C35. Residues 37 to 47 (PTVYSNVHLGN) carry the 'HIGH' region motif. Residues C230, H255, and E259 each coordinate Zn(2+). The 'KMSKS' region motif lies at 287-291 (KMSKS). Residue K290 participates in ATP binding.

The protein belongs to the class-I aminoacyl-tRNA synthetase family. As to quaternary structure, monomer. Requires Zn(2+) as cofactor.

It is found in the cytoplasm. The catalysed reaction is tRNA(Cys) + L-cysteine + ATP = L-cysteinyl-tRNA(Cys) + AMP + diphosphate. This Flavobacterium psychrophilum (strain ATCC 49511 / DSM 21280 / CIP 103535 / JIP02/86) protein is Cysteine--tRNA ligase.